An 89-amino-acid chain; its full sequence is Large ribosomal subunit protein bL27 (89 aa).

The protein belongs to the bacterial ribosomal protein bL27 family.

This chain is Large ribosomal subunit protein bL27, found in Bacteroides thetaiotaomicron (strain ATCC 29148 / DSM 2079 / JCM 5827 / CCUG 10774 / NCTC 10582 / VPI-5482 / E50).